The primary structure comprises 274 residues: Kit ligand (274 aa).

Positions 1-25 are cleaved as a signal peptide; sequence MKKTQTWIVTCIYLQLLLFNPLVKT. Residues 26–215 lie on the Extracellular side of the membrane; it reads KGLCRNRVTD…TNPIEDSSIQ (190 aa). 2 disulfides stabilise this stretch: C29–C114 and C68–C164. 4 N-linked (GlcNAc...) asparagine glycosylation sites follow: N90, N97, N145, and N196. A helical transmembrane segment spans residues 216-238; sequence WAVMALPACFSLVIGFAFGAFYW. At 239-274 the chain is on the cytoplasmic side; that stretch reads KKKQPNLTRTVENIQINEEDNEISMLQEKEREFQEV.

Belongs to the SCF family. In terms of assembly, homodimer, non-covalently linked. A soluble form is produced by proteolytic processing of isoform 1 in the extracellular domain.

The protein localises to the cell membrane. It localises to the secreted. It is found in the cytoplasm. The protein resides in the cytoskeleton. Its subcellular location is the cell projection. The protein localises to the lamellipodium. It localises to the filopodium. In terms of biological role, stimulates the proliferation of mast cells. Able to augment the proliferation of both myeloid and lymphoid hematopoietic progenitors in bone marrow culture. Also mediates cell-cell adhesion. Acts synergistically with other cytokines, probably interleukins. In Felis catus (Cat), this protein is Kit ligand (KITLG).